The primary structure comprises 358 residues: Methylthioribose-1-phosphate isomerase (358 aa).

Substrate contacts are provided by residues 54–56, arginine 96, and glutamine 205; that span reads RGA. The Proton donor role is filled by aspartate 246. 256-257 is a binding site for substrate; that stretch reads AK.

This sequence belongs to the eIF-2B alpha/beta/delta subunits family. MtnA subfamily.

It carries out the reaction 5-(methylsulfanyl)-alpha-D-ribose 1-phosphate = 5-(methylsulfanyl)-D-ribulose 1-phosphate. It participates in amino-acid biosynthesis; L-methionine biosynthesis via salvage pathway; L-methionine from S-methyl-5-thio-alpha-D-ribose 1-phosphate: step 1/6. In terms of biological role, catalyzes the interconversion of methylthioribose-1-phosphate (MTR-1-P) into methylthioribulose-1-phosphate (MTRu-1-P). The chain is Methylthioribose-1-phosphate isomerase from Pseudomonas entomophila (strain L48).